The chain runs to 72 residues: Metallothionein-like protein 1 (72 aa).

Belongs to the metallothionein superfamily. Type 15 family.

Metallothioneins have a high content of cysteine residues that bind various heavy metals. The chain is Metallothionein-like protein 1 from Erythranthe guttata (Yellow monkey flower).